A 386-amino-acid chain; its full sequence is MNVFWFIPTHGDSRYLGTSQGARAADYDYFQQIAVAADTLGYEGVLLPTGRSCEDAWVVASSLIAATKRLKFLVAIRPGISSPGLAARMAATFDRLSNGRLLINVVTGGDAAELEGDGVFVDHDTRYEITDEFLHIWRKLLTAAHTNDAIDFEGKHLSSKGGKALYPPVQNPHPPLWFGGSSPAAHEMAGEHIDTYLTWGEPPAAVAKKIADIRARAAAHGRQIKFGIRLHVIVRETEEEAWAAADKLISKLDDETISRAQASFSKMDSEGQRRMAALHGGKRGGRAELEVYPNLWAGVGLVRGGAGTALVGNPEQVAARMKEYAELGIDTFILSGYPHLEESYRFAELVFPLLPNRRNKVSNGPLSGPFGEIVGNNYLPKAASSS.

This sequence belongs to the SsuD family.

The enzyme catalyses an alkanesulfonate + FMNH2 + O2 = an aldehyde + FMN + sulfite + H2O + 2 H(+). Its function is as follows. Catalyzes the desulfonation of aliphatic sulfonates. The chain is Alkanesulfonate monooxygenase from Paraburkholderia phytofirmans (strain DSM 17436 / LMG 22146 / PsJN) (Burkholderia phytofirmans).